The chain runs to 324 residues: Olfactory receptor 6K2 (324 aa).

Topologically, residues 1-25 (MESPNRTTIQEFIFSAFPYSWVKSV) are extracellular. N-linked (GlcNAc...) asparagine glycosylation occurs at Asn5. A helical membrane pass occupies residues 26 to 46 (VCFVPLLFIYAFIVVGNLVII). The Cytoplasmic portion of the chain corresponds to 47-54 (TVVQLNTH). The chain crosses the membrane as a helical span at residues 55-75 (LHTPMYTFISALSFLEIWYTT). Residues 76–98 (ATIPKMLSSLLSERSISFNGCLL) are Extracellular-facing. A disulfide bridge links Cys96 with Cys188. Residues 99–119 (QMYFFHSTGICEVCLLTVMAF) form a helical membrane-spanning segment. The Cytoplasmic portion of the chain corresponds to 120-138 (DHYLAICSPLHYPSIMTPK). A helical membrane pass occupies residues 139–159 (LCTQLTLSCCVCGFITPLPEI). Topologically, residues 160–198 (AWISTLPFCGSNHLEHIFCDFLPVLRLACTDTRAIVMIQ) are extracellular. A helical transmembrane segment spans residues 199–218 (VVDVIHAVEIITAVMLIFMS). Residues 219 to 238 (YDGIVAVILRIHSAGGRRTA) are Cytoplasmic-facing. The chain crosses the membrane as a helical span at residues 239-259 (FSTCVSHFIVFSLFFGSVTLM). Residues 260 to 272 (YLRFSATYSLFWD) lie on the Extracellular side of the membrane. The helical transmembrane segment at 273–293 (IAIALAFAVLSPFFNPIIYSL) threads the bilayer. Topologically, residues 294–324 (RNKEIKEAIKKHIGQAKIFFSVRPGTSSKIF) are cytoplasmic.

This sequence belongs to the G-protein coupled receptor 1 family.

Its subcellular location is the cell membrane. Its function is as follows. Odorant receptor. The polypeptide is Olfactory receptor 6K2 (OR6K2) (Homo sapiens (Human)).